A 200-amino-acid chain; its full sequence is dITP/XTP pyrophosphatase (200 aa).

8–13 (THNPNK) serves as a coordination point for substrate. Mg(2+)-binding residues include E41 and D71. D71 serves as the catalytic Proton acceptor. Substrate-binding positions include T72, 153–156 (FGYD), K176, and 181–182 (HR).

It belongs to the HAM1 NTPase family. In terms of assembly, homodimer. Mg(2+) is required as a cofactor.

The enzyme catalyses XTP + H2O = XMP + diphosphate + H(+). It catalyses the reaction dITP + H2O = dIMP + diphosphate + H(+). It carries out the reaction ITP + H2O = IMP + diphosphate + H(+). In terms of biological role, pyrophosphatase that catalyzes the hydrolysis of nucleoside triphosphates to their monophosphate derivatives, with a high preference for the non-canonical purine nucleotides XTP (xanthosine triphosphate), dITP (deoxyinosine triphosphate) and ITP. Seems to function as a house-cleaning enzyme that removes non-canonical purine nucleotides from the nucleotide pool, thus preventing their incorporation into DNA/RNA and avoiding chromosomal lesions. This chain is dITP/XTP pyrophosphatase, found in Caldanaerobacter subterraneus subsp. tengcongensis (strain DSM 15242 / JCM 11007 / NBRC 100824 / MB4) (Thermoanaerobacter tengcongensis).